The following is a 236-amino-acid chain: MIQLFRVVISEQIIDNSEPVKCKRRTTLGKSLLFSRVLYREWWPATYCSRVSGYRDILPELDLVLWLIKADDRALSVDEYFWRHILQCGHQQVLFVVTQADKTEPCHEWDMAGIQPSPAQAQNIREKTEAVFRLFRPVHPVVAVSARTGWELDTLVSALMTALPDHAASPLMTRLQDELRTESVRSQAREQFTGAVDRIFDTAESVCIASVARTVLRAVRDTVVSVARAVWNWIFF.

This sequence to E.coli YfjP and YkfA.

This is an uncharacterized protein from Escherichia coli (strain K12).